We begin with the raw amino-acid sequence, 510 residues long: Ninja-family protein mc410 (510 aa).

Disordered regions lie at residues 1-179 (MDEN…RQIL), 323-414 (HPSH…PSEF), and 481-510 (RHASVEQTSQEPGTGVSSFPSSNPAASAQS). Basic and acidic residues-rich tracts occupy residues 31 to 44 (SKVEEVDRDGKVIN) and 103 to 146 (RPVE…DKTR). The span at 148-160 (SHISITTDEGSTA) shows a compositional bias: polar residues. 2 stretches are compositionally biased toward basic and acidic residues: residues 363–389 (RAMEHVKGNGRQHKAEETSNSRGEENV) and 397–406 (RAKDPPDQPR). Over residues 485–496 (VEQTSQEPGTGV) the composition is skewed to polar residues. Low complexity predominate over residues 497–510 (SSFPSSNPAASAQS).

The protein belongs to the Ninja family.

Its subcellular location is the nucleus. The sequence is that of Ninja-family protein mc410 (MC410) from Nicotiana tabacum (Common tobacco).